Consider the following 96-residue polypeptide: Aspartyl/glutamyl-tRNA(Asn/Gln) amidotransferase subunit C (96 aa).

It belongs to the GatC family. Heterotrimer of A, B and C subunits.

The catalysed reaction is L-glutamyl-tRNA(Gln) + L-glutamine + ATP + H2O = L-glutaminyl-tRNA(Gln) + L-glutamate + ADP + phosphate + H(+). The enzyme catalyses L-aspartyl-tRNA(Asn) + L-glutamine + ATP + H2O = L-asparaginyl-tRNA(Asn) + L-glutamate + ADP + phosphate + 2 H(+). Its function is as follows. Allows the formation of correctly charged Asn-tRNA(Asn) or Gln-tRNA(Gln) through the transamidation of misacylated Asp-tRNA(Asn) or Glu-tRNA(Gln) in organisms which lack either or both of asparaginyl-tRNA or glutaminyl-tRNA synthetases. The reaction takes place in the presence of glutamine and ATP through an activated phospho-Asp-tRNA(Asn) or phospho-Glu-tRNA(Gln). This Herpetosiphon aurantiacus (strain ATCC 23779 / DSM 785 / 114-95) protein is Aspartyl/glutamyl-tRNA(Asn/Gln) amidotransferase subunit C.